The sequence spans 577 residues: MSAMSAMGKPEHGSATTSDLEHRATESSLEKQDVEAAPPGPVKPVDPSPKQSTLKTTLLLASVFLAMFLVAVDRTIISTAIPSITNDYNSLNDVGWYGSIYLLTCCAFQLLFGKLYAMYSARVVLLVSLVIFLAASALCGAAPNSEAFIVGRAISGVGSAGIFAGNIVAIVHTIPLAKRPKIQGLMGAVMGLATIIGPLIGGAFTTRVTWRWCFYINLPFGGLALVAIFFYFKVPNRSPAADLSLKQKILSLDIPGTILLVPAIVCLLLALQWGGQVYDWNNKYIIVLLTLMAVLFVAFIAVQICLPKTATVPPRLLMHRSVVAGFLTTIAIGSAQYIFVYYIPIWFQTVRGVNAVDSGIQLLPLMISFVVASIVGGLLNQRIGYYTALGIFGSSVMAVGAGLMTTWNLEISQGKVIGYQILFGFGMGLAFQTPNLAVQTVLPRPEVPMGIALMFFGQLLSAAIFVAVGQNILANQLLSRLAGIDGFEHLKSLILSGGVTAVIDAVPEESKHRVLVAYSDALQQVFIVGLAMSCVGVVGTSCMEWKNILKKPAPPAGPPAGAPTESAPVETKAAGHT.

The segment at 1–49 (MSAMSAMGKPEHGSATTSDLEHRATESSLEKQDVEAAPPGPVKPVDPSP) is disordered. A compositionally biased stretch (basic and acidic residues) spans 19–34 (DLEHRATESSLEKQDV). Residues 38–47 (PPGPVKPVDP) are compositionally biased toward pro residues. 14 consecutive transmembrane segments (helical) span residues 52-72 (STLK…LVAV), 93-113 (DVGW…LLFG), 123-143 (VVLL…GAAP), 157-177 (VGSA…IPLA), 184-204 (GLMG…GGAF), 212-232 (WCFY…FFYF), 249-269 (ILSL…CLLL), 285-305 (IIVL…VQIC), 326-346 (FLTT…IPIW), 359-379 (GIQL…GGLL), 383-403 (IGYY…GAGL), 416-436 (VIGY…TPNL), 449-469 (MGIA…VAVG), and 525-545 (VFIV…CMEW). A disordered region spans residues 554 to 577 (PPAGPPAGAPTESAPVETKAAGHT).

This sequence belongs to the major facilitator superfamily. TCR/Tet family.

The protein localises to the membrane. In terms of biological role, MFS-type transporter; part of the ergochrome gene cluster responsible for the typical purple-black color of the ergot sclerotia. The ergochrome gene cluster produces several ergot pigments including the yellow ergochrome secalonic acid and its derivatives, as well as the red anthraquinones endocrocin and clavorubin. In Claviceps purpurea (strain 20.1) (Ergot fungus), this protein is MFS-type transporter CPUR_05422.